Here is a 44-residue protein sequence, read N- to C-terminus: Protein PsbN (44 aa).

A helical transmembrane segment spans residues 6–26 (FFYGVFLWCLLISVTGYSIYI).

Belongs to the PsbN family.

Its subcellular location is the plastid. The protein resides in the chloroplast thylakoid membrane. May play a role in photosystem I and II biogenesis. In Ostreococcus tauri, this protein is Protein PsbN.